A 300-amino-acid polypeptide reads, in one-letter code: 2-keto-3-deoxy-L-fuconate dehydrogenase (300 aa).

Residues 63–90 (LITA…IATD) and Asp-112 contribute to the NAD(+) site. Arg-198 is a substrate binding site. Tyr-201 (proton acceptor) is an active-site residue. NAD(+)-binding positions include Lys-205 and 234-238 (IKTPS). Residues Arg-242 and Arg-260 each contribute to the substrate site.

This sequence belongs to the short-chain dehydrogenases/reductases (SDR) family.

Functionally, plays a role in the catabolism of L-fucose. Catalyzes the NAD(+)-dependent oxidation of 2-keo-3-deoxy-L-fuconate to 2,4-diketo-3-deoxy-L-fuconate. In Xanthomonas campestris pv. campestris (strain ATCC 33913 / DSM 3586 / NCPPB 528 / LMG 568 / P 25), this protein is 2-keto-3-deoxy-L-fuconate dehydrogenase.